The chain runs to 309 residues: Tagatose-6-phosphate kinase (309 aa).

It belongs to the carbohydrate kinase PfkB family. LacC subfamily.

The enzyme catalyses D-tagatofuranose 6-phosphate + ATP = D-tagatofuranose 1,6-bisphosphate + ADP + H(+). It participates in carbohydrate metabolism; D-tagatose 6-phosphate degradation; D-glyceraldehyde 3-phosphate and glycerone phosphate from D-tagatose 6-phosphate: step 1/2. The sequence is that of Tagatose-6-phosphate kinase from Streptococcus pyogenes serotype M18 (strain MGAS8232).